We begin with the raw amino-acid sequence, 338 residues long: Holliday junction branch migration complex subunit RuvB (338 aa).

Positions 1–180 are large ATPase domain (RuvB-L); sequence MERLLDNKFS…FGIIERLDYY (180 aa). Leu-19, Arg-20, Gly-61, Lys-64, Thr-65, Thr-66, Arg-170, Tyr-180, and Arg-217 together coordinate ATP. Thr-65 contributes to the Mg(2+) binding site. A small ATPAse domain (RuvB-S) region spans residues 181–251; sequence TVEELSQIVM…VAKSGLEMFE (71 aa). A head domain (RuvB-H) region spans residues 254-338; the sequence is EYGLDLVDRN…FNVKESGDKR (85 aa). The DNA site is built by Lys-309 and Arg-314.

It belongs to the RuvB family. As to quaternary structure, homohexamer. Forms an RuvA(8)-RuvB(12)-Holliday junction (HJ) complex. HJ DNA is sandwiched between 2 RuvA tetramers; dsDNA enters through RuvA and exits via RuvB. An RuvB hexamer assembles on each DNA strand where it exits the tetramer. Each RuvB hexamer is contacted by two RuvA subunits (via domain III) on 2 adjacent RuvB subunits; this complex drives branch migration. In the full resolvosome a probable DNA-RuvA(4)-RuvB(12)-RuvC(2) complex forms which resolves the HJ.

The protein resides in the cytoplasm. It carries out the reaction ATP + H2O = ADP + phosphate + H(+). The RuvA-RuvB-RuvC complex processes Holliday junction (HJ) DNA during genetic recombination and DNA repair, while the RuvA-RuvB complex plays an important role in the rescue of blocked DNA replication forks via replication fork reversal (RFR). RuvA specifically binds to HJ cruciform DNA, conferring on it an open structure. The RuvB hexamer acts as an ATP-dependent pump, pulling dsDNA into and through the RuvAB complex. RuvB forms 2 homohexamers on either side of HJ DNA bound by 1 or 2 RuvA tetramers; 4 subunits per hexamer contact DNA at a time. Coordinated motions by a converter formed by DNA-disengaged RuvB subunits stimulates ATP hydrolysis and nucleotide exchange. Immobilization of the converter enables RuvB to convert the ATP-contained energy into a lever motion, pulling 2 nucleotides of DNA out of the RuvA tetramer per ATP hydrolyzed, thus driving DNA branch migration. The RuvB motors rotate together with the DNA substrate, which together with the progressing nucleotide cycle form the mechanistic basis for DNA recombination by continuous HJ branch migration. Branch migration allows RuvC to scan DNA until it finds its consensus sequence, where it cleaves and resolves cruciform DNA. This Caldicellulosiruptor saccharolyticus (strain ATCC 43494 / DSM 8903 / Tp8T 6331) protein is Holliday junction branch migration complex subunit RuvB.